The chain runs to 404 residues: MDALRAVAFYALFVFLWSLPCCQSAALISQKRSKGARSAFDGQRSHKFLKEILASSPGASRRDDFKDPVVPHDYMISIYRTYSAAEKLGLNASFFRSSKSANTITSFVDKGKDDLTLSPLRRQTYLFDVSTLSDKEELVGAELRIFRKSPGDVQPSPSGVYNLHLLSCRSERPLASRSIDLQDSRKAEWEVLDVWGIFKHRHQENQLCLQLKVTYGKSDTEIDLKQLGFHRHSRTQQERAILVVYTRSKKRENLFNEMKEKIKSRGDDDEEESALQFKARRRRRTALNNRHGKRHGKKSKSRCSKKALHVNFKELGWDDWIIAPLDYEAYHCEGVCDFPLRSHLEPTNHAIIQTLMNSMDPNSTPPSCCVPTKLSPISILYIDSGNNVVYKQYEDMVVEQCGCR.

Positions 1-24 are cleaved as a signal peptide; it reads MDALRAVAFYALFVFLWSLPCCQS. Positions 25-284 are excised as a propeptide; it reads AALISQKRSK…LQFKARRRRR (260 aa). Asparagine 91 carries an N-linked (GlcNAc...) asparagine glycan. The disordered stretch occupies residues 263–304; the sequence is KSRGDDDEEESALQFKARRRRRTALNNRHGKRHGKKSKSRCS. Positions 278–304 are enriched in basic residues; that stretch reads KARRRRRTALNNRHGKRHGKKSKSRCS. Cystine bridges form between cysteine 303/cysteine 369, cysteine 332/cysteine 401, and cysteine 336/cysteine 403.

The protein belongs to the TGF-beta family. In terms of assembly, homodimer; disulfide-linked. First expressed in late gastrula stage embryos (9.5 hours post fertilization (hpf)) in anterior neuroectoderm corresponding to the future dorsal part of the brain. Shortly after tailbud formation (11 hpf), expression expands to the entire neural region and is subsequently expressed in derivatives of the lateral neural plate and migrating neural crest cells, with the future midbrain and hindbrain showing strong expression. Also expressed weakly and transiently in the posterior embryo from 11.5 hpf to 15 hpf in the lateral mesoderm, and in ectoderm above the neural keel. At 14 hpf, expressed along the entire length of the embryo and starting around the 16-somite stage, expressed in the dorsal quadrant of the retina, representing the distal tip of the eye anlage. At this stage, also expressed in the hatching gland and the hypochord. At 24 hpf, expressed in the roof plate outlining the fourth brain ventricle, in the posterior hypochord, the primitive gut endoderm, the ventral tail mesenchyme, the dorsal part of the neural tube and the dorsal fin. Weakly expressed in the dorsal part of the posterior spinal cord and in blood cell precursors.

The protein localises to the secreted. Functionally, growth factor that controls proliferation and cellular differentiation in the retina. Plays a key role in regulating apoptosis during retinal development. Establishes dorsal-ventral positional information in the retina and controls the formation of the retinotectal map. Functions maternally in dorsal/ventral patterning to induce the expression of the zygotic bmp2b and bmp4 genes and ventralize embryos. Zygotic expression does not appear to regulate axis specification, but instead functions to establish the integrity of the axial vessels during embryonic development. May be involved in maintaining the identity of cells of the dorsal-most neural tube and of at least a subset of neural crest cells. The protein is Growth/differentiation factor 6-A (gdf6a) of Danio rerio (Zebrafish).